Here is a 582-residue protein sequence, read N- to C-terminus: DNA polymerase IV (582 aa).

The segment at 127–161 (NADDGQSSTDKESEISTDVESERNDDSNNKDMIQA) is disordered. Positions 135 to 155 (TDKESEISTDVESERNDDSNN) are enriched in basic and acidic residues. The tract at residues 360-369 (RGYSKCGDID) is involved in ssDNA binding. Mg(2+) is bound by residues Asp367, Asp369, and Asp502.

It belongs to the DNA polymerase type-X family. As to quaternary structure, interacts with DNL4 subunit of the DNL4-LIF1 complex. It depends on Mg(2+) as a cofactor.

It is found in the nucleus. It catalyses the reaction DNA(n) + a 2'-deoxyribonucleoside 5'-triphosphate = DNA(n+1) + diphosphate. Stimulated by the interaction with the DNL4-LIF1 complex. Repair polymerase. Involved in gap-filling in DNA nonhomologous end joining (NHEJ) required for double-strand break repair. Seems to conduct DNA synthesis in a stepwise distributive fashion rather than in a processive fashion as for other DNA polymerases. Preferentially acts upon short gaps formed by the alignment of linear duplexes with complementary single-strand ends. Required for filling gaps that need removal of a 5'- or 3'-terminal mismatch, however lacks nuclease activities. The protein is DNA polymerase IV (POL4) of Saccharomyces cerevisiae (strain ATCC 204508 / S288c) (Baker's yeast).